A 158-amino-acid polypeptide reads, in one-letter code: Glutathione peroxidase-like peroxiredoxin gpx1 (158 aa).

C36 acts as the Cysteine sulfenic acid (-SOH) intermediate in catalysis. A disulfide bond links C36 and C82.

Belongs to the glutathione peroxidase family. As to quaternary structure, monomer.

The protein resides in the cytoplasm. It localises to the mitochondrion. The catalysed reaction is a hydroperoxide + [thioredoxin]-dithiol = an alcohol + [thioredoxin]-disulfide + H2O. Its function is as follows. Glutathione peroxidase-like protein that protects cells during oxidative stress. Has peroxidase activity reducing hydrogen peroxide, alkyl and phospholipid hydroperoxides using preferentially thioredoxin as a reducing power. May act as a scavenger of H(2)O(2). This is Glutathione peroxidase-like peroxiredoxin gpx1 from Schizosaccharomyces pombe (strain 972 / ATCC 24843) (Fission yeast).